A 372-amino-acid polypeptide reads, in one-letter code: Glutamate 5-kinase (372 aa).

ATP is bound at residue Lys-14. Substrate-binding residues include Ser-54, Asp-141, and Asn-153. Position 173–174 (173–174) interacts with ATP; it reads TD. Positions 280-358 constitute a PUA domain; that stretch reads RGTLVLDDGA…DAIVGLLGYM (79 aa).

It belongs to the glutamate 5-kinase family.

Its subcellular location is the cytoplasm. The enzyme catalyses L-glutamate + ATP = L-glutamyl 5-phosphate + ADP. It participates in amino-acid biosynthesis; L-proline biosynthesis; L-glutamate 5-semialdehyde from L-glutamate: step 1/2. Functionally, catalyzes the transfer of a phosphate group to glutamate to form L-glutamate 5-phosphate. The sequence is that of Glutamate 5-kinase from Pseudomonas fluorescens (strain Pf0-1).